The following is a 708-amino-acid chain: Exocyst complex component 8 (708 aa).

Positions 168–268 constitute a PH domain; the sequence is YLVYNGDLLE…WLEVLEETKR (101 aa). Basic and acidic residues predominate over residues 271–282; it reads ALSEKRRLEQEA. Residues 271–314 are disordered; the sequence is ALSEKRRLEQEALPRPAPTPPESTNPFEEEEEEEEEPSAEEEAV. Acidic residues predominate over residues 297-314; sequence FEEEEEEEEEPSAEEEAV.

This sequence belongs to the EXO84 family. The exocyst complex is composed of EXOC1, EXOC2, EXOC3, EXOC4, EXOC5, EXOC6, EXOC7 and EXOC8.

Its subcellular location is the cytoplasm. It is found in the perinuclear region. It localises to the cell projection. The protein resides in the growth cone. Its function is as follows. Component of the exocyst complex involved in the docking of exocytic vesicles with fusion sites on the plasma membrane. The polypeptide is Exocyst complex component 8 (EXOC8) (Gallus gallus (Chicken)).